We begin with the raw amino-acid sequence, 118 residues long: Ribonuclease P protein component (118 aa).

Belongs to the RnpA family. As to quaternary structure, consists of a catalytic RNA component (M1 or rnpB) and a protein subunit.

It carries out the reaction Endonucleolytic cleavage of RNA, removing 5'-extranucleotides from tRNA precursor.. RNaseP catalyzes the removal of the 5'-leader sequence from pre-tRNA to produce the mature 5'-terminus. It can also cleave other RNA substrates such as 4.5S RNA. The protein component plays an auxiliary but essential role in vivo by binding to the 5'-leader sequence and broadening the substrate specificity of the ribozyme. This is Ribonuclease P protein component from Shewanella sp. (strain ANA-3).